The sequence spans 380 residues: SAM and SH3 domain-containing protein 3 (380 aa).

A disordered region spans residues 1-174; the sequence is MLRRKPSNAS…STAPQYTGPF (174 aa). A compositionally biased stretch (low complexity) spans 22–41; sequence LQRSSSFKDFAKSKPSSPVV. 3 positions are modified to phosphoserine: S27, S34, and S42. Phosphothreonine is present on T61. The span at 84-93 shows a compositional bias: basic residues; sequence MNRKTGKKMV. S97 is modified (phosphoserine). At T103 the chain carries Phosphothreonine. The residue at position 110 (S110) is a Phosphoserine. At T112 the chain carries Phosphothreonine. Phosphoserine occurs at positions 113 and 120. Over residues 143–158 the composition is skewed to polar residues; the sequence is RQASTGSELCSPSPGS. The region spanning 173–234 is the SH3 domain; it reads PFCGRARVHT…KFIYVDVLPE (62 aa). The 65-residue stretch at 252-316 folds into the SAM domain; that stretch reads PKPKTLHELL…LTAAELLLDY (65 aa). Phosphothreonine is present on T318. Acidic residues predominate over residues 318-327; the sequence is TGSEEAEEGT. The disordered stretch occupies residues 318-380; sequence TGSEEAEEGT…LHGLSLSGAP (63 aa). S320 carries the post-translational modification Phosphoserine.

The protein belongs to the SASH family.

In terms of biological role, may function as a signaling adapter protein in lymphocytes. This Bos taurus (Bovine) protein is SAM and SH3 domain-containing protein 3.